We begin with the raw amino-acid sequence, 226 residues long: Peroxiredoxin-like 2C (226 aa).

The segment at 1–24 (MAAPVTRQVSGCAGRVPSPAGSVT) is disordered.

Belongs to the peroxiredoxin-like PRXL2 family. PRXL2C subfamily.

May positively regulate ERK1/2 signaling and AKT1 activation leading to HIF1A up-regulation with an increased expression of glycolysis genes and enhanced glycolysis. The protein is Peroxiredoxin-like 2C (Prxl2c) of Mus musculus (Mouse).